A 154-amino-acid chain; its full sequence is SsrA-binding protein (154 aa).

Belongs to the SmpB family.

Its subcellular location is the cytoplasm. In terms of biological role, required for rescue of stalled ribosomes mediated by trans-translation. Binds to transfer-messenger RNA (tmRNA), required for stable association of tmRNA with ribosomes. tmRNA and SmpB together mimic tRNA shape, replacing the anticodon stem-loop with SmpB. tmRNA is encoded by the ssrA gene; the 2 termini fold to resemble tRNA(Ala) and it encodes a 'tag peptide', a short internal open reading frame. During trans-translation Ala-aminoacylated tmRNA acts like a tRNA, entering the A-site of stalled ribosomes, displacing the stalled mRNA. The ribosome then switches to translate the ORF on the tmRNA; the nascent peptide is terminated with the 'tag peptide' encoded by the tmRNA and targeted for degradation. The ribosome is freed to recommence translation, which seems to be the essential function of trans-translation. The protein is SsrA-binding protein of Acetivibrio thermocellus (strain ATCC 27405 / DSM 1237 / JCM 9322 / NBRC 103400 / NCIMB 10682 / NRRL B-4536 / VPI 7372) (Clostridium thermocellum).